Consider the following 165-residue polypeptide: MELSESTKKALKAIPLMRTKAGPRDGDSWVQRLKEEYEALIAFINNNKAADLDWFRLESNSDGTRWFGKCWHYHNMLRYEFDVEFDIPVTYPTTAPEIALPELDGKTAKMYRGGRICLSDHFKPLWARNVPKFGIAQAFSLGLGPWLAVEVPDLVDRGMIQPKTA.

Catalysis depends on Cys117, which acts as the Glycyl thioester intermediate.

Belongs to the ubiquitin-conjugating enzyme family. UFC1 subfamily.

In terms of biological role, E2-like enzyme which forms an intermediate with UFM1 via a thioester linkage. This is Ubiquitin-fold modifier-conjugating enzyme 1 from Brugia malayi (Filarial nematode worm).